The following is a 624-amino-acid chain: Chaperone protein HtpG (624 aa).

Positions 1–336 are a; substrate-binding; it reads MKGQETRGFQ…SNDLPLNVSR (336 aa). The segment at 337 to 552 is b; that stretch reads EILQDSTVTR…ADEMSTQMAK (216 aa). Positions 553–624 are c; it reads LFAAAGQSVP…IRRMNQLLVS (72 aa).

It belongs to the heat shock protein 90 family. In terms of assembly, homodimer.

The protein localises to the cytoplasm. In terms of biological role, molecular chaperone. Has ATPase activity. The polypeptide is Chaperone protein HtpG (Salmonella choleraesuis (strain SC-B67)).